Here is a 542-residue protein sequence, read N- to C-terminus: CTP synthase (542 aa).

An amidoligase domain region spans residues 1–265 (MARYVFITGG…DSEILSAFGI (265 aa)). S13 is a binding site for CTP. S13 lines the UTP pocket. 14 to 19 (SLGKGI) contacts ATP. An L-glutamine-binding site is contributed by Y54. D71 contacts ATP. Mg(2+)-binding residues include D71 and E139. CTP contacts are provided by residues 146-148 (DIE), 186-191 (KTKPTQ), and K222. UTP contacts are provided by residues 186–191 (KTKPTQ) and K222. Residues 291–541 (TIAIVGKYTG…IAATVEQSRL (251 aa)) enclose the Glutamine amidotransferase type-1 domain. A353 is a binding site for L-glutamine. Catalysis depends on C380, which acts as the Nucleophile; for glutamine hydrolysis. L-glutamine is bound by residues 381–384 (FGMQ), E404, and R469. Catalysis depends on residues H514 and E516.

This sequence belongs to the CTP synthase family. Homotetramer.

The enzyme catalyses UTP + L-glutamine + ATP + H2O = CTP + L-glutamate + ADP + phosphate + 2 H(+). It carries out the reaction L-glutamine + H2O = L-glutamate + NH4(+). The catalysed reaction is UTP + NH4(+) + ATP = CTP + ADP + phosphate + 2 H(+). It participates in pyrimidine metabolism; CTP biosynthesis via de novo pathway; CTP from UDP: step 2/2. Allosterically activated by GTP, when glutamine is the substrate; GTP has no effect on the reaction when ammonia is the substrate. The allosteric effector GTP functions by stabilizing the protein conformation that binds the tetrahedral intermediate(s) formed during glutamine hydrolysis. Inhibited by the product CTP, via allosteric rather than competitive inhibition. Its function is as follows. Catalyzes the ATP-dependent amination of UTP to CTP with either L-glutamine or ammonia as the source of nitrogen. Regulates intracellular CTP levels through interactions with the four ribonucleotide triphosphates. The chain is CTP synthase from Bartonella bacilliformis (strain ATCC 35685 / KC583 / Herrer 020/F12,63).